The chain runs to 507 residues: Secreted lipase ARB_01498 (507 aa).

Positions 1–21 are cleaved as a signal peptide; that stretch reads MFVQLLTYGLVAASTLQGVFA. The active-site Acyl-ester intermediate is the Ser196. Residues Asn262, Asn321, Asn358, and Asn416 are each glycosylated (N-linked (GlcNAc...) asparagine).

It belongs to the type-B carboxylesterase/lipase family.

Its subcellular location is the secreted. The catalysed reaction is a triacylglycerol + H2O = a diacylglycerol + a fatty acid + H(+). This is Secreted lipase ARB_01498 from Arthroderma benhamiae (strain ATCC MYA-4681 / CBS 112371) (Trichophyton mentagrophytes).